A 97-amino-acid chain; its full sequence is YcgL domain-containing protein Pfl01_1389 (97 aa).

The YcgL domain occupies 3 to 87 (RICSIYQSSK…AEEEYIEHLP (85 aa)).

This is YcgL domain-containing protein Pfl01_1389 from Pseudomonas fluorescens (strain Pf0-1).